The chain runs to 201 residues: Recombination protein RecR (201 aa).

A C4-type zinc finger spans residues Cys60–Cys75. The Toprim domain maps to Ser83–Pro178.

The protein belongs to the RecR family.

Its function is as follows. May play a role in DNA repair. It seems to be involved in an RecBC-independent recombinational process of DNA repair. It may act with RecF and RecO. This is Recombination protein RecR from Nitrobacter winogradskyi (strain ATCC 25391 / DSM 10237 / CIP 104748 / NCIMB 11846 / Nb-255).